The following is a 257-amino-acid chain: Protein UL24 homolog (257 aa).

The interval 193 to 257 (KKPKMDRGGK…PRAGPACSGP (65 aa)) is disordered.

It belongs to the herpesviridae UL24 family.

Its subcellular location is the virion. It localises to the host cytoplasm. It is found in the host nucleus. The protein localises to the host nucleolus. The protein resides in the host Golgi apparatus. In terms of biological role, may participate in nuclear egress of viral particles. Plays a role in the dispersal of several host nucleolar proteins including NCL/nucleolin and NPM1. Since deletion of host NCL/nucleolin negatively impact on nuclear egress, UL24 supposedly acts on this process through its effect on host nucleoli. Induces cell cycle arrest in host cells at the G2/M phase following by apoptosis. The mechanism involves the inhibition of host mitotic complex cyclin-B/CDK1. This chain is Protein UL24 homolog (ORF20), found in Homo sapiens (Human).